A 206-amino-acid polypeptide reads, in one-letter code: FMN-dependent NADH:quinone oxidoreductase (206 aa).

FMN is bound by residues serine 9, 15–17, 95–98, and 139–142; these read SVS, MYNF, and SRGG.

The protein belongs to the azoreductase type 1 family. As to quaternary structure, homodimer. It depends on FMN as a cofactor.

The enzyme catalyses 2 a quinone + NADH + H(+) = 2 a 1,4-benzosemiquinone + NAD(+). It catalyses the reaction N,N-dimethyl-1,4-phenylenediamine + anthranilate + 2 NAD(+) = 2-(4-dimethylaminophenyl)diazenylbenzoate + 2 NADH + 2 H(+). Functionally, quinone reductase that provides resistance to thiol-specific stress caused by electrophilic quinones. Its function is as follows. Also exhibits azoreductase activity. Catalyzes the reductive cleavage of the azo bond in aromatic azo compounds to the corresponding amines. The protein is FMN-dependent NADH:quinone oxidoreductase of Legionella pneumophila subsp. pneumophila (strain Philadelphia 1 / ATCC 33152 / DSM 7513).